Here is a 345-residue protein sequence, read N- to C-terminus: L-Ala-D/L-Glu epimerase (345 aa).

Residues threonine 134 and lysine 159 each contribute to the substrate site. Lysine 161 (proton acceptor; specific for (R)-substrate epimerization) is an active-site residue. Aspartate 188 contacts Mg(2+). Asparagine 190 provides a ligand contact to substrate. The Mg(2+) site is built by glutamate 216 and aspartate 241. Lysine 265 functions as the Proton acceptor; specific for (S)-substrate epimerization in the catalytic mechanism. 3 residues coordinate substrate: cysteine 292, aspartate 317, and aspartate 319.

It belongs to the mandelate racemase/muconate lactonizing enzyme family. It depends on Mg(2+) as a cofactor.

It catalyses the reaction L-alanyl-L-glutamate = L-alanyl-D-glutamate. Its pathway is cell wall degradation; peptidoglycan degradation. Functionally, catalyzes the epimerization of L-Ala-D-Glu to L-Ala-L-Glu and has probably a role in the metabolism of the murein peptide, of which L-Ala-D-Glu is a component. Is also able to catalyze the reverse reaction and the epimerization of a broad range of other dipeptides; is most efficient with L-Ala-D/L-Phe, L-Ala-D/L-Tyr, and L-Ala-D/L-His. This Thermotoga maritima (strain ATCC 43589 / DSM 3109 / JCM 10099 / NBRC 100826 / MSB8) protein is L-Ala-D/L-Glu epimerase.